The sequence spans 362 residues: 3-dehydroquinate synthase (362 aa).

Residues Asp-72–Lys-77, Gly-106–Asp-110, Thr-130–Thr-131, Lys-143, Lys-152, and Cys-170–Thr-173 contribute to the NAD(+) site. 3 residues coordinate Zn(2+): Glu-185, His-248, and His-265.

Belongs to the sugar phosphate cyclases superfamily. Dehydroquinate synthase family. It depends on Co(2+) as a cofactor. Requires Zn(2+) as cofactor. The cofactor is NAD(+).

The protein resides in the cytoplasm. The enzyme catalyses 7-phospho-2-dehydro-3-deoxy-D-arabino-heptonate = 3-dehydroquinate + phosphate. Its pathway is metabolic intermediate biosynthesis; chorismate biosynthesis; chorismate from D-erythrose 4-phosphate and phosphoenolpyruvate: step 2/7. Functionally, catalyzes the conversion of 3-deoxy-D-arabino-heptulosonate 7-phosphate (DAHP) to dehydroquinate (DHQ). This is 3-dehydroquinate synthase from Aliivibrio fischeri (strain ATCC 700601 / ES114) (Vibrio fischeri).